We begin with the raw amino-acid sequence, 113 residues long: Fruiting body-specific class I hydrophobin fbh1 (113 aa).

The N-terminal stretch at 1-20 (MFSIRIATVVLAASALLAAA) is a signal peptide. 4 disulfides stabilise this stretch: cysteine 33–cysteine 92, cysteine 40–cysteine 86, cysteine 41–cysteine 73, and cysteine 93–cysteine 106.

It belongs to the fungal hydrophobin family. In terms of assembly, self-assembles to form functional amyloid fibrils called rodlets. Self-assembly into fibrillar rodlets occurs spontaneously at hydrophobic:hydrophilic interfaces and the rodlets further associate laterally to form amphipathic monolayers.

It is found in the secreted. The protein localises to the cell wall. In terms of biological role, aerial growth, conidiation, and dispersal of filamentous fungi in the environment rely upon a capability of their secreting small amphipathic proteins called hydrophobins (HPBs) with low sequence identity. Class I can self-assemble into an outermost layer of rodlet bundles on aerial cell surfaces, conferring cellular hydrophobicity that supports fungal growth, development and dispersal; whereas Class II form highly ordered films at water-air interfaces through intermolecular interactions but contribute nothing to the rodlet structure. Fbh1 is a fruiting body-specific class I hydrophobin that is involved in the growth rate and primordia formation. The polypeptide is Fruiting body-specific class I hydrophobin fbh1 (Pleurotus ostreatus (strain PC15) (Oyster mushroom)).